Consider the following 245-residue polypeptide: Proteolipid protein DM alpha (245 aa).

The next 4 membrane-spanning stretches (helical) occupy residues 19–35 (LIAT…FCGC), 71–87 (IIYG…VLLL), 117–133 (FIFL…GVFA), and 204–220 (LFIA…IALL).

The protein belongs to the myelin proteolipid protein family. Highly expressed in white matter in myelinating shark brain.

It is found in the membrane. The polypeptide is Proteolipid protein DM alpha (Squalus acanthias (Spiny dogfish)).